The primary structure comprises 359 residues: Flavonoid 8-O-methyltransferase 1 (359 aa).

Asp223 is a binding site for S-adenosyl-L-methionine. Catalysis depends on His261, which acts as the Proton acceptor.

This sequence belongs to the class I-like SAM-binding methyltransferase superfamily. Cation-independent O-methyltransferase family. Expressed in leaves and trichomes, especially in cv. SD and cv. EMX-1, but barely in cv. MC and cv. SW.

The catalysed reaction is an 8-hydroxyflavone + S-adenosyl-L-methionine = an 8-methoxyflavone + S-adenosyl-L-homocysteine + H(+). It catalyses the reaction 4',7,8-trihydroxyflavone + S-adenosyl-L-methionine = 4',7-dihydroxy-8-methoxyflavone + S-adenosyl-L-homocysteine + H(+). The enzyme catalyses 7,8-dihydroxyflavone + S-adenosyl-L-methionine = 7-hydroxy-8-methoxyflavone + S-adenosyl-L-homocysteine + H(+). It carries out the reaction 3',4',7,8-tetrahydroxyflavone + S-adenosyl-L-methionine = 3',4,7-trihydroxy-8-methoxyflavone + S-adenosyl-L-homocysteine + H(+). Its pathway is flavonoid metabolism. Its activity is regulated as follows. Strongly inhibited by gardenin B (GARD B). In terms of biological role, cation-independent flavonoid 8-O-methyltransferase involved in the biosynthesis of polymethoxylated flavonoids natural products such as nevadensin and salvigenin, aroma compounds which contribute to the flavor of sweet basil, and exhibit pharmacological activities such as anti-allergic, anti-oxidant, antibacterial, anti-proliferative, and anti-inflammatory effects. Catalyzes S-adenosylmethionine-dependent regioselective 8-O-methylation of flavonoids; mediates likely the conversion of pilosin (PIL) to nevadensin (NEV) and of 8-hydroxysalvigenin (8-OH-SALV) to gardenin B (GARD B). Can also use 3',4',7,8-tetrahydroxyflavone as substrate. Accepts other unnatural O-diphenols including 7,8,4'-trihydroxy-flavone and 7-O-methyl-8-hydroxy-flavone, and, with a lower efficiency, 7,8-dihydroxy-flavone, as substrates. The sequence is that of Flavonoid 8-O-methyltransferase 1 from Ocimum basilicum (Sweet basil).